The sequence spans 164 residues: Ribosome maturation factor RimM (164 aa).

The PRC barrel domain occupies 90 to 161; sequence EGRYYVADII…EIIIKPVKTW (72 aa).

This sequence belongs to the RimM family. As to quaternary structure, binds ribosomal protein uS19.

Its subcellular location is the cytoplasm. In terms of biological role, an accessory protein needed during the final step in the assembly of 30S ribosomal subunit, possibly for assembly of the head region. Essential for efficient processing of 16S rRNA. May be needed both before and after RbfA during the maturation of 16S rRNA. It has affinity for free ribosomal 30S subunits but not for 70S ribosomes. This chain is Ribosome maturation factor RimM, found in Clostridium tetani (strain Massachusetts / E88).